Consider the following 427-residue polypeptide: 3-phosphoshikimate 1-carboxyvinyltransferase (427 aa).

3-phosphoshikimate contacts are provided by Lys20, Ser21, and Arg25. Residue Lys20 participates in phosphoenolpyruvate binding. Gly92 and Arg120 together coordinate phosphoenolpyruvate. 4 residues coordinate 3-phosphoshikimate: Ser166, Gln168, Asp312, and Lys339. Gln168 is a phosphoenolpyruvate binding site. Asp312 functions as the Proton acceptor in the catalytic mechanism. Phosphoenolpyruvate contacts are provided by Arg343 and Arg385.

Belongs to the EPSP synthase family. Monomer.

The protein resides in the cytoplasm. The enzyme catalyses 3-phosphoshikimate + phosphoenolpyruvate = 5-O-(1-carboxyvinyl)-3-phosphoshikimate + phosphate. It functions in the pathway metabolic intermediate biosynthesis; chorismate biosynthesis; chorismate from D-erythrose 4-phosphate and phosphoenolpyruvate: step 6/7. Catalyzes the transfer of the enolpyruvyl moiety of phosphoenolpyruvate (PEP) to the 5-hydroxyl of shikimate-3-phosphate (S3P) to produce enolpyruvyl shikimate-3-phosphate and inorganic phosphate. The chain is 3-phosphoshikimate 1-carboxyvinyltransferase from Streptococcus equi subsp. equi (strain 4047).